A 148-amino-acid polypeptide reads, in one-letter code: UPF0178 protein Mlg_1612 (148 aa).

This sequence belongs to the UPF0178 family.

This Alkalilimnicola ehrlichii (strain ATCC BAA-1101 / DSM 17681 / MLHE-1) protein is UPF0178 protein Mlg_1612.